A 269-amino-acid polypeptide reads, in one-letter code: Oligoribonuclease, mitochondrial (269 aa).

The region spanning 55 to 227 is the Exonuclease domain; the sequence is LVWIDCEMTG…SDIKESIAQL (173 aa). Residue tyrosine 184 is part of the active site. The interval 240–269 is disordered; that stretch reads ETESVESIGSEQPESPSSSTSSLKRQRTDF. Low complexity predominate over residues 245-261; that stretch reads ESIGSEQPESPSSSTSS.

The protein belongs to the oligoribonuclease family.

The protein resides in the mitochondrion. Functionally, 3'-to-5' exoribonuclease specific for small oligoribonucleotides. The sequence is that of Oligoribonuclease, mitochondrial (REX2) from Saccharomyces cerevisiae (strain ATCC 204508 / S288c) (Baker's yeast).